A 578-amino-acid chain; its full sequence is Probable arginine--tRNA ligase, mitochondrial (578 aa).

A mitochondrion-targeting transit peptide spans 1 to 16 (MACGFRRSIACQLSRV). Residues 133-135 (SPN), H144, Y322, D326, and Q350 each bind L-arginine. The 'HIGH' region motif lies at 133-144 (SPNIAKKFHVGH). K568 bears the N6-acetyllysine mark.

Belongs to the class-I aminoacyl-tRNA synthetase family.

It localises to the mitochondrion membrane. The enzyme catalyses tRNA(Arg) + L-arginine + ATP = L-arginyl-tRNA(Arg) + AMP + diphosphate. Its function is as follows. Catalyzes the attachment of arginine to tRNA(Arg) in a two-step reaction: arginine is first activated by ATP to form Arg-AMP and then transferred to the acceptor end of tRNA(Arg). In Mus musculus (Mouse), this protein is Probable arginine--tRNA ligase, mitochondrial (Rars2).